Reading from the N-terminus, the 400-residue chain is CinA-like protein (400 aa).

This sequence belongs to the CinA family.

In Escherichia coli (strain 55989 / EAEC), this protein is CinA-like protein.